The chain runs to 466 residues: MSVVPVVDVLQGRAAVGSEVTVRGWVRTRRDSKAGISFVAVYDGSCFDPLQAVVNNTLPNYQDEVLHLTTGCSVEVTGTVVASPGEGQSFEIQATAINVVGWVDDPDTYPMAAKRHSIEYLREVAHLRPRTNLIGAVARVRHTLAQAIHRFFDENGYFWVSTPLITASDTEGAGEMFRVSTLDLENLPRTDTGAVDFSEDFFGKEAFLTVSGQLNGETYACALSKVYTFGPTFRAENSNTSRHLAEFWMVEPEVAFASLDDVAGLAEKMLKYVFQAVLNERADDMKFFAERVDKDAVDRLQRFVTSDFAQVDYTDAIEILLASGQKFENDVSWGIDLSSEHERYLAEKHFKAPVVVKNYPKDIKAFYMRMNEDGKTVAAMDVLAPGIGEIIGGSQREERLDVLDARLAEMGLNKEDYWWYRDLRRYGTVPHSGFGLGFERLISYVTGVQNVRDVIPFPRTPRNASF.

This sequence belongs to the class-II aminoacyl-tRNA synthetase family. In terms of assembly, homodimer.

It is found in the cytoplasm. The catalysed reaction is tRNA(Asn) + L-asparagine + ATP = L-asparaginyl-tRNA(Asn) + AMP + diphosphate + H(+). This Yersinia pseudotuberculosis serotype O:1b (strain IP 31758) protein is Asparagine--tRNA ligase.